We begin with the raw amino-acid sequence, 612 residues long: FAD-linked oxidoreductase notD' (612 aa).

A signal peptide spans 1–19; the sequence is MRDIRELLLVLFTSCLALG. Residues Asn50, Asn86, and Asn109 are each glycosylated (N-linked (GlcNAc...) asparagine). Positions 124–307 constitute an FAD-binding PCMH-type domain; that stretch reads GQGRIPRYSA…TSITMPVFGA (184 aa). N-linked (GlcNAc...) asparagine glycans are attached at residues Asn311 and Asn396.

This sequence belongs to the oxygen-dependent FAD-linked oxidoreductase family. The cofactor is FAD.

Its pathway is alkaloid biosynthesis. In terms of biological role, FAD-linked oxidoreductase; part of the gene cluster that mediates the biosynthesis of notoamide, a fungal indole alkaloid that belongs to a family of natural products containing a characteristic bicyclo[2.2.2]diazaoctane core. The first step of notoamide biosynthesis involves coupling of L-proline and L-tryptophan by the bimodular NRPS notE', to produce cyclo-L-tryptophan-L-proline called brevianamide F. The reverse prenyltransferase notF' then acts as a deoxybrevianamide E synthase and converts brevianamide F to deoxybrevianamide E via reverse prenylation at C-2 of the indole ring leading to the bicyclo[2.2.2]diazaoctane core. Deoxybrevianamide E is further hydroxylated at C-6 of the indole ring, likely catalyzed by the cytochrome P450 monooxygenase notG', to yield 6-hydroxy-deoxybrevianamide E. 6-hydroxy-deoxybrevianamide E is a specific substrate of the prenyltransferase notC' for normal prenylation at C-7 to produce 6-hydroxy-7-prenyl-deoxybrevianamide, also called notoamide S. As the proposed pivotal branching point in notoamide biosynthesis, notoamide S can be diverted to notoamide E through an oxidative pyran ring closure putatively catalyzed by either notH' cytochrome P450 monooxygenase or the notD' FAD-linked oxidoreductase. This step would be followed by an indole 2,3-epoxidation-initiated pinacol-like rearrangement catalyzed by the notB' FAD-dependent monooxygenase leading to the formation of notoamide C and notoamide D. On the other hand notoamide S is converted to notoamide T by notH' (or notD'), a bifunctional oxidase that also functions as the intramolecular Diels-Alderase responsible for generation of (-)-notoamide T. To generate antipodal (+)-notoaminide T, notH (or notD) in Aspergillus strain MF297-2 is expected to catalyze a Diels-Alder reaction leading to the opposite stereochemistry. The remaining oxidoreductase notD' (or notH') likely catalyzes the oxidative pyran ring formation to yield (-)-stephacidin A. The FAD-dependent monooxygenase notI' is highly similar to notB' and is predicted to catalyze a similar conversion from (-)-stephacidin A to (+)-notoamide B via the 2,3-epoxidation of (-)-stephacidin A followed by a pinacol-type rearrangement. Finally, it remains unclear which enzyme could be responsible for the final hydroxylation steps leading to notoamide A and sclerotiamide. This is FAD-linked oxidoreductase notD' from Aspergillus versicolor.